Consider the following 278-residue polypeptide: MKGFLLLLSFMTRIPMPKTDYDEEKLGKSMKYFPVVGIIVGFILLFFCIIFNFILKNISYSAVLPLMIIVVILTDLITTGALHLDGLADTFDGIFSYRSKHKMLEIMKDSRLGSNGALALILYFLLKFILLFSLTIESREAAVYAIITYPVVSRFCSVVSCASSPYARGSGMGKTFVDNIKTCGLIVATVITLLYTIGMLFMPFILFTNYSLPMQFMIRSVLIIVIIVGLLALFAFAFSKLIERKIGGITGDTLGALLEISSLVYIFLFLVIPTFFIG.

Transmembrane regions (helical) follow at residues 35–55 (VVGI…NFIL), 62–82 (AVLP…TGAL), 116–136 (GALA…SLTI), 141–161 (AAVY…VVSC), 185–205 (LIVA…MPFI), 222–242 (LIIV…SKLI), and 257–277 (LLEI…TFFI).

Belongs to the CobS family. It depends on Mg(2+) as a cofactor.

Its subcellular location is the cell inner membrane. The catalysed reaction is alpha-ribazole + adenosylcob(III)inamide-GDP = adenosylcob(III)alamin + GMP + H(+). The enzyme catalyses alpha-ribazole 5'-phosphate + adenosylcob(III)inamide-GDP = adenosylcob(III)alamin 5'-phosphate + GMP + H(+). It participates in cofactor biosynthesis; adenosylcobalamin biosynthesis; adenosylcobalamin from cob(II)yrinate a,c-diamide: step 7/7. Joins adenosylcobinamide-GDP and alpha-ribazole to generate adenosylcobalamin (Ado-cobalamin). Also synthesizes adenosylcobalamin 5'-phosphate from adenosylcobinamide-GDP and alpha-ribazole 5'-phosphate. The polypeptide is Adenosylcobinamide-GDP ribazoletransferase (Fusobacterium nucleatum subsp. nucleatum (strain ATCC 25586 / DSM 15643 / BCRC 10681 / CIP 101130 / JCM 8532 / KCTC 2640 / LMG 13131 / VPI 4355)).